Consider the following 295-residue polypeptide: Bifunctional protein FolD (295 aa).

Residues 165–167, Ser190, and Ile231 contribute to the NADP(+) site; that span reads GRS.

It belongs to the tetrahydrofolate dehydrogenase/cyclohydrolase family. As to quaternary structure, homodimer.

The catalysed reaction is (6R)-5,10-methylene-5,6,7,8-tetrahydrofolate + NADP(+) = (6R)-5,10-methenyltetrahydrofolate + NADPH. It catalyses the reaction (6R)-5,10-methenyltetrahydrofolate + H2O = (6R)-10-formyltetrahydrofolate + H(+). It functions in the pathway one-carbon metabolism; tetrahydrofolate interconversion. Functionally, catalyzes the oxidation of 5,10-methylenetetrahydrofolate to 5,10-methenyltetrahydrofolate and then the hydrolysis of 5,10-methenyltetrahydrofolate to 10-formyltetrahydrofolate. The polypeptide is Bifunctional protein FolD (Nitrosomonas eutropha (strain DSM 101675 / C91 / Nm57)).